Reading from the N-terminus, the 286-residue chain is Soluble epoxide hydrolase (286 aa).

The 98-residue stretch at 26–123 folds into the AB hydrolase-1 domain; it reads YPLVLLHGWP…DLVERLFILD (98 aa). The active-site Nucleophile is aspartate 99. Tyrosine 209 (proton donor) is an active-site residue. Histidine 264 serves as the catalytic Proton acceptor.

Belongs to the AB hydrolase superfamily. Epoxide hydrolase family. As to quaternary structure, homotetramer.

The protein resides in the cytoplasm. It localises to the cell membrane. The enzyme catalyses an epoxide + H2O = an ethanediol. In terms of biological role, involved in catabolic degradation of epoxides. Shows highest activity towards C6 and C7 carbocyclic epoxides. Also active towards linear 1,2-epoxyalkanes. This chain is Soluble epoxide hydrolase, found in Corynebacterium sp. (strain C12).